Reading from the N-terminus, the 185-residue chain is Elongation factor P (185 aa).

Belongs to the elongation factor P family.

It is found in the cytoplasm. Its pathway is protein biosynthesis; polypeptide chain elongation. In terms of biological role, involved in peptide bond synthesis. Stimulates efficient translation and peptide-bond synthesis on native or reconstituted 70S ribosomes in vitro. Probably functions indirectly by altering the affinity of the ribosome for aminoacyl-tRNA, thus increasing their reactivity as acceptors for peptidyl transferase. This chain is Elongation factor P, found in Acaryochloris marina (strain MBIC 11017).